Here is a 329-residue protein sequence, read N- to C-terminus: 1-phosphatidylinositol phosphodiesterase (329 aa).

Positions 1–31 (MSNKKLILKLFICSTIFITFVFALHDKRVVA) are cleaved as a signal peptide. The PI-PLC X-box domain maps to 51–194 (NIPLARISIP…ARGKIVLLKR (144 aa)). Histidine 63 (proton acceptor) is an active-site residue. Histidine 113 serves as the catalytic Proton donor.

It localises to the secreted. The enzyme catalyses a 1,2-diacyl-sn-glycero-3-phospho-(1D-myo-inositol) = 1D-myo-inositol 1,2-cyclic phosphate + a 1,2-diacyl-sn-glycerol. Its function is as follows. Cleaves glycosylphosphatidylinositol (GPI) and phosphatidylinositol (PI) anchors but not PI phosphates. This Bacillus thuringiensis protein is 1-phosphatidylinositol phosphodiesterase.